Consider the following 490-residue polypeptide: Glutamyl-tRNA(Gln) amidotransferase subunit A (490 aa).

Active-site charge relay system residues include Lys-76 and Ser-151. Catalysis depends on Ser-175, which acts as the Acyl-ester intermediate.

It belongs to the amidase family. GatA subfamily. Heterotrimer of A, B and C subunits.

The catalysed reaction is L-glutamyl-tRNA(Gln) + L-glutamine + ATP + H2O = L-glutaminyl-tRNA(Gln) + L-glutamate + ADP + phosphate + H(+). Allows the formation of correctly charged Gln-tRNA(Gln) through the transamidation of misacylated Glu-tRNA(Gln) in organisms which lack glutaminyl-tRNA synthetase. The reaction takes place in the presence of glutamine and ATP through an activated gamma-phospho-Glu-tRNA(Gln). The protein is Glutamyl-tRNA(Gln) amidotransferase subunit A of Methylobacillus flagellatus (strain ATCC 51484 / DSM 6875 / VKM B-1610 / KT).